Consider the following 155-residue polypeptide: 3-dehydroquinate dehydratase (155 aa).

Y31 acts as the Proton acceptor in catalysis. N83, H89, and D96 together coordinate substrate. H109 (proton donor) is an active-site residue. Substrate-binding positions include 110 to 111 (LS) and R120.

Belongs to the type-II 3-dehydroquinase family. Homododecamer.

The catalysed reaction is 3-dehydroquinate = 3-dehydroshikimate + H2O. Its pathway is metabolic intermediate biosynthesis; chorismate biosynthesis; chorismate from D-erythrose 4-phosphate and phosphoenolpyruvate: step 3/7. Catalyzes a trans-dehydration via an enolate intermediate. This Laribacter hongkongensis (strain HLHK9) protein is 3-dehydroquinate dehydratase.